The sequence spans 508 residues: RanBP-type and C3HC4-type zinc finger-containing protein 1 (508 aa).

Methionine 1 is subject to N-acetylmethionine. The interaction with IRF3 stretch occupies residues methionine 1 to arginine 218. Positions methionine 1–glutamine 268 are interaction with TAB2. Serine 50 carries the phosphoserine modification. One can recognise a Ubiquitin-like domain in the interval isoleucine 55–isoleucine 119. The interaction with RNF31 stretch occupies residues valine 69 to leucine 131. Residues threonine 161–proline 191 form a disordered region. The RanBP2-type zinc-finger motif lies at proline 188–glutamate 220. Residues aspartate 231–tyrosine 260 adopt a coiled-coil conformation. The interval glutamate 276 to cysteine 504 is TRIAD supradomain. Zn(2+)-binding residues include cysteine 280, cysteine 283, cysteine 298, histidine 300, cysteine 303, cysteine 306, and cysteine 321. The RING-type 1 zinc finger occupies cysteine 280–cysteine 330. Tyrosine 328 bears the Phosphotyrosine mark. Residues cysteine 330, cysteine 369, cysteine 374, cysteine 389, cysteine 392, cysteine 397, cysteine 400, histidine 404, cysteine 409, cysteine 445, and cysteine 448 each coordinate Zn(2+). The IBR-type zinc-finger motif lies at glutamine 349–cysteine 409. Residues cysteine 445–threonine 474 form an RING-type 2; atypical zinc finger. The active site involves cysteine 458. The Zn(2+) site is built by cysteine 463 and cysteine 466.

It belongs to the RBR family. Component of the LUBAC complex (linear ubiquitin chain assembly complex) which consists of SHARPIN, RBCK1 and RNF31. LUBAC has a MW of approximately 600 kDa suggesting a heteromultimeric assembly of its subunits. Interacts with beta-I-type (PRKCB1) and zeta-type protein kinase C (PRKCZ). Interacts with UBE2L3. Interacts with IREB2 only in iron-rich conditions. Associates with the TNF-R1 signaling complex (TNF-RSC) in a stimulation-dependent manner. Interacts with EYA1, TAB2, TAB3, MAP3K7 TRAF6 and RIPK1. Interacts with IRF3. Auto-ubiquitinated. Auto-ubiquitination leads to degradation by the proteasome. In terms of processing, phosphorylated. In vitro, phosphorylation inhibits auto-ubiquitination activity. Widely expressed.

The catalysed reaction is [E2 ubiquitin-conjugating enzyme]-S-ubiquitinyl-L-cysteine + [acceptor protein]-L-lysine = [E2 ubiquitin-conjugating enzyme]-L-cysteine + [acceptor protein]-N(6)-ubiquitinyl-L-lysine.. It participates in protein modification; protein ubiquitination. In terms of biological role, E3 ubiquitin-protein ligase, which accepts ubiquitin from specific E2 ubiquitin-conjugating enzymes, such as UBE2L3/UBCM4, and then transfers it to substrates. Functions as an E3 ligase for oxidized IREB2 and both heme and oxygen are necessary for IREB2 ubiquitination. Promotes ubiquitination of TAB2 and IRF3 and their degradation by the proteasome. Component of the LUBAC complex which conjugates linear ('Met-1'-linked) polyubiquitin chains to substrates and plays a key role in NF-kappa-B activation and regulation of inflammation. LUBAC conjugates linear polyubiquitin to IKBKG and RIPK1 and is involved in activation of the canonical NF-kappa-B and the JNK signaling pathways. Linear ubiquitination mediated by the LUBAC complex interferes with TNF-induced cell death and thereby prevents inflammation. LUBAC is recruited to the TNF-R1 signaling complex (TNF-RSC) following polyubiquitination of TNF-RSC components by BIRC2 and/or BIRC3 and to conjugate linear polyubiquitin to IKBKG and possibly other components contributing to the stability of the complex. The LUBAC complex is also involved in innate immunity by conjugating linear polyubiquitin chains at the surface of bacteria invading the cytosol to form the ubiquitin coat surrounding bacteria. LUBAC is not able to initiate formation of the bacterial ubiquitin coat, and can only promote formation of linear polyubiquitins on pre-existing ubiquitin. The bacterial ubiquitin coat acts as an 'eat-me' signal for xenophagy and promotes NF-kappa-B activation. Together with OTULIN, the LUBAC complex regulates the canonical Wnt signaling during angiogenesis. Binds polyubiquitin of different linkage types. This Rattus norvegicus (Rat) protein is RanBP-type and C3HC4-type zinc finger-containing protein 1 (Rbck1).